A 218-amino-acid chain; its full sequence is Octanoyltransferase (218 aa).

Residues 30-212 enclose the BPL/LPL catalytic domain; the sequence is ENTADEIWLV…HFYNILGYNA (183 aa). Residues 69 to 76, 141 to 143, and 154 to 156 contribute to the substrate site; these read RGGQITYH, SLG, and GLA. The Acyl-thioester intermediate role is filled by C172.

It belongs to the LipB family.

The protein resides in the cytoplasm. It carries out the reaction octanoyl-[ACP] + L-lysyl-[protein] = N(6)-octanoyl-L-lysyl-[protein] + holo-[ACP] + H(+). Its pathway is protein modification; protein lipoylation via endogenous pathway; protein N(6)-(lipoyl)lysine from octanoyl-[acyl-carrier-protein]: step 1/2. In terms of biological role, catalyzes the transfer of endogenously produced octanoic acid from octanoyl-acyl-carrier-protein onto the lipoyl domains of lipoate-dependent enzymes. Lipoyl-ACP can also act as a substrate although octanoyl-ACP is likely to be the physiological substrate. This Actinobacillus pleuropneumoniae serotype 5b (strain L20) protein is Octanoyltransferase.